The sequence spans 86 residues: Exopolysaccharide production repressor protein (86 aa).

A helical transmembrane segment spans residues 18–38 (FAVTLAASVFLQVVYFLSLLF). A disordered region spans residues 44–86 (TRESDRSIHSGTRQADQPQKRDRDKTEQSNVPKLDPRRKRRTP). Positions 61-70 (PQKRDRDKTE) are enriched in basic and acidic residues.

The protein resides in the cell membrane. The protein operates within glycan metabolism; exopolysaccharide biosynthesis. Functionally, inhibition of exopolysaccharide synthesis (EPS) and nodulation ability (NOD). This chain is Exopolysaccharide production repressor protein (exoX), found in Rhizobium leguminosarum bv. phaseoli.